Here is a 276-residue protein sequence, read N- to C-terminus: Reaction center protein L chain (276 aa).

A run of 3 helical transmembrane segments spans residues 33 to 56 (GFFG…GAAL), 85 to 113 (GLWQ…RKLG), and 116 to 141 (YHIP…VMMG). Residues His154 and His174 each coordinate (7R,8Z)-bacteriochlorophyll b. The chain crosses the membrane as a helical span at residues 171-200 (NPAHMLGITLFFTTCLALALHGSLILSAAN). His191 provides a ligand contact to Fe cation. Phe217 lines the a ubiquinone pocket. A helical membrane pass occupies residues 226–252 (GTLGIHRVGLILALSAVVWSIICMILS). Position 231 (His231) interacts with Fe cation.

This sequence belongs to the reaction center PufL/M/PsbA/D family. Reaction center is composed of four bacteriochlorophylls, two bacteriopheophytins, two ubiquinones, one iron, and three highly hydrophobic polypeptide chains (designated L, M, and H).

Its subcellular location is the cellular chromatophore membrane. The reaction center is a membrane-bound complex that mediates the initial photochemical event in the electron transfer process of photosynthesis. This Rhodospirillum rubrum protein is Reaction center protein L chain (pufL).